Consider the following 148-residue polypeptide: Small ribosomal subunit protein uS9 (148 aa).

It belongs to the universal ribosomal protein uS9 family.

This chain is Small ribosomal subunit protein uS9 (RpS16), found in Aedes aegypti (Yellowfever mosquito).